The sequence spans 179 residues: Bifunctional protein PyrR (179 aa).

The PRPP-binding motif lies at 100–112 (VILVDDVLFTGRT).

This sequence belongs to the purine/pyrimidine phosphoribosyltransferase family. PyrR subfamily.

It carries out the reaction UMP + diphosphate = 5-phospho-alpha-D-ribose 1-diphosphate + uracil. Its function is as follows. Regulates the transcription of the pyrimidine nucleotide (pyr) operon in response to exogenous pyrimidines. In terms of biological role, also displays a weak uracil phosphoribosyltransferase activity which is not physiologically significant. This Haemophilus influenzae (strain 86-028NP) protein is Bifunctional protein PyrR.